Reading from the N-terminus, the 357-residue chain is Probable RNA methyltransferase Daro_1157 (357 aa).

Glu-91 functions as the Proton acceptor in the catalytic mechanism. The 227-residue stretch at 94-320 (LLPRDGLCIS…TTVRNSAGQD (227 aa)) folds into the Radical SAM core domain. Residues Cys-101 and Cys-325 are joined by a disulfide bond. Residues Cys-108, Cys-112, and Cys-115 each coordinate [4Fe-4S] cluster. S-adenosyl-L-methionine is bound by residues 153–154 (GE), Ser-183, 206–208 (SLH), and Asn-282. Cys-325 (S-methylcysteine intermediate) is an active-site residue.

This sequence belongs to the radical SAM superfamily. RlmN family. It depends on [4Fe-4S] cluster as a cofactor.

It is found in the cytoplasm. This Dechloromonas aromatica (strain RCB) protein is Probable RNA methyltransferase Daro_1157.